The primary structure comprises 363 residues: MINSLIKLARINVQKLQPYQSARRIGGQHGDVWLNANESPVSVELSFKKKLLNRYPECQPIDLISAYADYVRLSTNQILVTRGADEGIELLIRAFCESGKDAIIYCPPTYDMYRVNAEIYNIKYKEVPTIKNTWQLDLLNIKLNLNSVKLIYICNPNNPTGSTCSKKDLFDLLEMTLNTSLVVVDEAYIEFLPKESMTLYLKKYPNLVILRTLSKAFALAGIRCGFVLAQKEIINILNKIISPYPISIPTASIALESLHKNYIKLMQNRVLDLNANRVWLINKLKKISSVKKIFQSNTNYILVQFFMSEEIFQMLWEKGIIVRNQDHKINLKQCLRITVGTHLECSRLIEEIKFFSKKYLKGV.

N6-(pyridoxal phosphate)lysine is present on K215.

Belongs to the class-II pyridoxal-phosphate-dependent aminotransferase family. Histidinol-phosphate aminotransferase subfamily. As to quaternary structure, homodimer. Pyridoxal 5'-phosphate is required as a cofactor.

It catalyses the reaction L-histidinol phosphate + 2-oxoglutarate = 3-(imidazol-4-yl)-2-oxopropyl phosphate + L-glutamate. Its pathway is amino-acid biosynthesis; L-histidine biosynthesis; L-histidine from 5-phospho-alpha-D-ribose 1-diphosphate: step 7/9. This chain is Histidinol-phosphate aminotransferase, found in Buchnera aphidicola subsp. Diuraphis noxia.